Here is a 458-residue protein sequence, read N- to C-terminus: Major capsid protein (458 aa).

Residues 21–110 (LEGLTAAQKA…EIKSLLTARE (90 aa)) are a coiled coil.

It belongs to the HK97 phage major capsid protein family. Interacts with the decoration protein; each hexon binds a single copy of the decoration protein. Interacts with the portal protein. Post-translationally, the scaffolding domain delta is cleaved by the prohead protease and lost after assembly. The major capsid protein precursors together with both the portal complex and the maturation protease form prohead I. All copies of the major capsid protein precursor are cleaved to the mature major capsid protein by release of the scaffolding domain delta, yielding the metastable prohead II.

It is found in the virion. Functionally, major capsid protein that self-associates to form 120 hexamers and 11 pentamers, building the T=13 icosahedral capsid which about 860 Angstroms in diameter. Responsible for its self-assembly into a procapsid. The phage does not need to encode a separate scaffolfing protein because its capsid protein contains the delta domain that carries that function. The capsid gains its final stability through the reorganization of the subunits that takes place upon expansion. DNA encapsidation through the portal triggers capsid expansion and the binding of the decoration protein to the capsid exterior. Might play a role in counteracting the host Pycsar defense system that is mediated by pyrimidine cyclases and leads to abortive infection. In Escherichia coli (Enterobacteria phage T5), this protein is Major capsid protein.